A 422-amino-acid chain; its full sequence is UDP-N-acetylglucosamine 1-carboxyvinyltransferase (422 aa).

Residue 22–23 coordinates phosphoenolpyruvate; it reads KN. UDP-N-acetyl-alpha-D-glucosamine is bound at residue R94. Catalysis depends on C118, which acts as the Proton donor. C118 carries the post-translational modification 2-(S-cysteinyl)pyruvic acid O-phosphothioketal. UDP-N-acetyl-alpha-D-glucosamine is bound by residues 123 to 127, 163 to 166, D308, and I330; these read RPVDL and KVSV.

The protein belongs to the EPSP synthase family. MurA subfamily.

It localises to the cytoplasm. The catalysed reaction is phosphoenolpyruvate + UDP-N-acetyl-alpha-D-glucosamine = UDP-N-acetyl-3-O-(1-carboxyvinyl)-alpha-D-glucosamine + phosphate. It participates in cell wall biogenesis; peptidoglycan biosynthesis. Its function is as follows. Cell wall formation. Adds enolpyruvyl to UDP-N-acetylglucosamine. The sequence is that of UDP-N-acetylglucosamine 1-carboxyvinyltransferase from Yersinia enterocolitica serotype O:8 / biotype 1B (strain NCTC 13174 / 8081).